Consider the following 417-residue polypeptide: Signal recognition particle receptor FtsY (417 aa).

GTP-binding positions include G228–T235, D310–R314, and T368–D371.

It belongs to the GTP-binding SRP family. FtsY subfamily. Part of the signal recognition particle protein translocation system, which is composed of SRP and FtsY.

The protein localises to the cell membrane. It is found in the cytoplasm. It catalyses the reaction GTP + H2O = GDP + phosphate + H(+). Involved in targeting and insertion of nascent membrane proteins into the cytoplasmic membrane. Acts as a receptor for the complex formed by the signal recognition particle (SRP) and the ribosome-nascent chain (RNC). This is Signal recognition particle receptor FtsY from Methanosarcina acetivorans (strain ATCC 35395 / DSM 2834 / JCM 12185 / C2A).